A 53-amino-acid chain; its full sequence is Conotoxin-like peptide 1 (53 aa).

The first 18 residues, 1 to 18, serve as a signal peptide directing secretion; that stretch reads MGVKSALFIMAVFAAANV. 3 disulfide bridges follow: C25–C39, C32–C43, and C38–C50.

The protein resides in the secreted. The chain is Conotoxin-like peptide 1 (CTL-1) from Orgyia pseudotsugata multicapsid polyhedrosis virus (OpMNPV).